A 222-amino-acid chain; its full sequence is Orotate phosphoribosyltransferase (222 aa).

Lys-29 is a 5-phospho-alpha-D-ribose 1-diphosphate binding site. Residue 37-38 participates in orotate binding; sequence FF. Residues 75–76, Arg-101, Lys-102, Lys-105, His-107, and 126–134 contribute to the 5-phospho-alpha-D-ribose 1-diphosphate site; these read YK and DDVISAGTS. Residues Ser-130 and Arg-158 each coordinate orotate.

Belongs to the purine/pyrimidine phosphoribosyltransferase family. PyrE subfamily. As to quaternary structure, homodimer. Requires Mg(2+) as cofactor.

The catalysed reaction is orotidine 5'-phosphate + diphosphate = orotate + 5-phospho-alpha-D-ribose 1-diphosphate. It functions in the pathway pyrimidine metabolism; UMP biosynthesis via de novo pathway; UMP from orotate: step 1/2. Functionally, catalyzes the transfer of a ribosyl phosphate group from 5-phosphoribose 1-diphosphate to orotate, leading to the formation of orotidine monophosphate (OMP). The chain is Orotate phosphoribosyltransferase from Polynucleobacter asymbioticus (strain DSM 18221 / CIP 109841 / QLW-P1DMWA-1) (Polynucleobacter necessarius subsp. asymbioticus).